A 382-amino-acid chain; its full sequence is Chaperone protein DnaJ (382 aa).

The J domain maps to 5 to 70; the sequence is DYYETLGVSR…NKRAAYDRYG (66 aa). A CR-type zinc finger spans residues 140 to 218; sequence GKTAQIRVPT…CHGQGRITEE (79 aa). 8 residues coordinate Zn(2+): Cys-153, Cys-156, Cys-170, Cys-173, Cys-192, Cys-195, Cys-206, and Cys-209. CXXCXGXG motif repeat units lie at residues 153-160, 170-177, 192-199, and 206-213; these read CDVCSGSG, CGTCQGSG, CPTCHGRG, and CGKCHGQG.

This sequence belongs to the DnaJ family. In terms of assembly, homodimer. The cofactor is Zn(2+).

It localises to the cytoplasm. Functionally, participates actively in the response to hyperosmotic and heat shock by preventing the aggregation of stress-denatured proteins and by disaggregating proteins, also in an autonomous, DnaK-independent fashion. Unfolded proteins bind initially to DnaJ; upon interaction with the DnaJ-bound protein, DnaK hydrolyzes its bound ATP, resulting in the formation of a stable complex. GrpE releases ADP from DnaK; ATP binding to DnaK triggers the release of the substrate protein, thus completing the reaction cycle. Several rounds of ATP-dependent interactions between DnaJ, DnaK and GrpE are required for fully efficient folding. Also involved, together with DnaK and GrpE, in the DNA replication of plasmids through activation of initiation proteins. The chain is Chaperone protein DnaJ from Rhizobium rhizogenes (strain K84 / ATCC BAA-868) (Agrobacterium radiobacter).